A 334-amino-acid polypeptide reads, in one-letter code: Heat-inducible transcription repressor HrcA (334 aa).

This sequence belongs to the HrcA family.

Its function is as follows. Negative regulator of class I heat shock genes (grpE-dnaK-dnaJ and groELS operons). Prevents heat-shock induction of these operons. The protein is Heat-inducible transcription repressor HrcA of Acidovorax ebreus (strain TPSY) (Diaphorobacter sp. (strain TPSY)).